Here is a 280-residue protein sequence, read N- to C-terminus: Diaminopimelate epimerase (280 aa).

The substrate site is built by Asn13 and Asn64. Cys73 functions as the Proton donor in the catalytic mechanism. Substrate contacts are provided by residues 74-75 (GN), Asn164, Asn197, and 215-216 (ER). Catalysis depends on Cys224, which acts as the Proton acceptor. 225–226 (GT) serves as a coordination point for substrate.

This sequence belongs to the diaminopimelate epimerase family. Homodimer.

It is found in the cytoplasm. The catalysed reaction is (2S,6S)-2,6-diaminopimelate = meso-2,6-diaminopimelate. It participates in amino-acid biosynthesis; L-lysine biosynthesis via DAP pathway; DL-2,6-diaminopimelate from LL-2,6-diaminopimelate: step 1/1. Its function is as follows. Catalyzes the stereoinversion of LL-2,6-diaminopimelate (L,L-DAP) to meso-diaminopimelate (meso-DAP), a precursor of L-lysine and an essential component of the bacterial peptidoglycan. This Leptospira biflexa serovar Patoc (strain Patoc 1 / Ames) protein is Diaminopimelate epimerase.